A 727-amino-acid polypeptide reads, in one-letter code: 1,4-alpha-glucan branching enzyme GlgB (727 aa).

D411 (nucleophile) is an active-site residue. E464 acts as the Proton donor in catalysis.

Belongs to the glycosyl hydrolase 13 family. GlgB subfamily. Monomer.

It catalyses the reaction Transfers a segment of a (1-&gt;4)-alpha-D-glucan chain to a primary hydroxy group in a similar glucan chain.. It functions in the pathway glycan biosynthesis; glycogen biosynthesis. Its function is as follows. Catalyzes the formation of the alpha-1,6-glucosidic linkages in glycogen by scission of a 1,4-alpha-linked oligosaccharide from growing alpha-1,4-glucan chains and the subsequent attachment of the oligosaccharide to the alpha-1,6 position. The sequence is that of 1,4-alpha-glucan branching enzyme GlgB from Protochlamydia amoebophila (strain UWE25).